A 416-amino-acid chain; its full sequence is Enterobactin exporter EntS (416 aa).

Residues 1–21 are Cytoplasmic-facing; it reads MNKQSWLLNLSLLKTHPAFRA. Residues 22–42 form a helical membrane-spanning segment; the sequence is VFLARFISIVSLGLLGVAVPV. Over 43–55 the chain is Periplasmic; it reads QIQMMTHSTWQVG. A helical transmembrane segment spans residues 56-76; it reads LSVTLTGGAMFVGLMVGGVLA. Residues 77-83 are Cytoplasmic-facing; the sequence is DRYERKK. The chain crosses the membrane as a helical span at residues 84 to 104; it reads VILLARGTCGIGFIGLCLNAL. The Periplasmic segment spans residues 105–109; it reads LPEPS. A helical membrane pass occupies residues 110–130; sequence LLAIYLLGLWDGFFASLGVTA. Residues 131-156 are Cytoplasmic-facing; that stretch reads LLAATPALVGRENLMQAGAITMLTVR. Residues 157–177 form a helical membrane-spanning segment; the sequence is LGSVISPMIGGLLLATGGVAW. A topological domain (periplasmic) is located at residue Asn-178. The helical transmembrane segment at 179-199 threads the bilayer; sequence YGLAAAGTFITLLPLLSLPAL. Residues 200–218 lie on the Cytoplasmic side of the membrane; sequence PPPPQPREHPLKSLLAGFR. Residues 219–239 traverse the membrane as a helical segment; sequence FLLASPLVGGIALLGGLLTMA. Over 240-256 the chain is Periplasmic; that stretch reads SAVRVLYPALADNWQMS. A helical transmembrane segment spans residues 257–277; that stretch reads AAQIGFLYAAIPLGAAIGALT. Residues 278–287 are Cytoplasmic-facing; that stretch reads SGKLAHSARP. The chain crosses the membrane as a helical span at residues 288-307; that stretch reads GLLMLLSTLGSFLAIGLFGL. Over 308–313 the chain is Periplasmic; it reads MPMWIL. The chain crosses the membrane as a helical span at residues 314–336; it reads GVICLALFGWLSAVSSLLQYTML. The Cytoplasmic segment spans residues 337 to 356; it reads QTQTPEAMLGRINGLWTAQN. A helical transmembrane segment spans residues 357–377; that stretch reads VTGDAIGAALLGGLGAMMTPV. Ala-378 is a topological domain (periplasmic). A helical transmembrane segment spans residues 379 to 399; that stretch reads SASASGFGLLIIGVLLLLVLV. At 400–416 the chain is on the cytoplasmic side; that stretch reads ELRRFRQTPPQVTASDS.

Belongs to the major facilitator superfamily. EntS (TC 2.A.1.38) family.

It localises to the cell inner membrane. Functionally, component of an export pathway for enterobactin. The protein is Enterobactin exporter EntS of Escherichia coli O81 (strain ED1a).